The sequence spans 120 residues: Flagellar protein FliT (120 aa).

A required for homodimerization region spans residues 1 to 50 (MERHQHLLSEYQQILTLSEQMLMLATVENWNTLVDLEMTYLKAVENTANI). The tract at residues 60 to 98 (LQELLRQKLRSILENEIEIKRLLQRRLDKLSELVGQSTR) is fliD binding.

It belongs to the FliT family. Homodimer. Interacts with FliD and FlhC.

It localises to the cytoplasm. It is found in the cytosol. Functionally, dual-function protein that regulates the transcription of class 2 flagellar operons and that also acts as an export chaperone for the filament-capping protein FliD. As a transcriptional regulator, acts as an anti-FlhDC factor; it directly binds FlhC, thus inhibiting the binding of the FlhC/FlhD complex to class 2 promoters, resulting in decreased expression of class 2 flagellar operons. As a chaperone, effects FliD transition to the membrane by preventing its premature polymerization, and by directing it to the export apparatus. This Yersinia pestis (strain Pestoides F) protein is Flagellar protein FliT.